Consider the following 357-residue polypeptide: Alpha-2-macroglobulin receptor-associated protein (357 aa).

The first 34 residues, 1–34, serve as a signal peptide directing secretion; sequence MAPRRVRSFLRGLPALLLLLLFLGPWPAASHGGK. A disordered region spans residues 32 to 52; the sequence is GGKYSREKNQPKPSPKRESGE. Residues 35 to 52 show a composition bias toward basic and acidic residues; that stretch reads YSREKNQPKPSPKRESGE. Residues Ser-50 and Ser-135 each carry the phosphoserine modification. Residues 219 to 310 are a coiled coil; that stretch reads SRHTELKEKL…AHEKLRHAES (92 aa). The LDL receptor binding stretch occupies residues 237–353; sequence RLRRVSHQGY…DLSGRISRAR (117 aa). A Phosphothreonine modification is found at Thr-248. The N-linked (GlcNAc...) asparagine glycan is linked to Asn-268. Positions 354–357 match the Prevents secretion from ER motif; sequence HNEL.

Belongs to the alpha-2-MRAP family. In terms of assembly, interacts with the LRP1/alpha-2-macroglobulin receptor heavy and light chains; the interaction is transient and coincides with a reduction of ligand binding by the receptor. Interacts with LRP2/glycoprotein 330. Interacts with LRP1B; binding is followed by internalization and degradation. Interacts with LDLR. Interacts with SORL1. Interacts with LRP1; this interaction is followed by rapid internalization. N-glycosylated.

It is found in the rough endoplasmic reticulum lumen. The protein localises to the endoplasmic reticulum-Golgi intermediate compartment lumen. The protein resides in the golgi apparatus. It localises to the cis-Golgi network. Its subcellular location is the golgi apparatus lumen. It is found in the endosome lumen. The protein localises to the cell surface. In terms of biological role, molecular chaperone for LDL receptor-related proteins that may regulate their ligand binding activity along the secretory pathway. The polypeptide is Alpha-2-macroglobulin receptor-associated protein (Homo sapiens (Human)).